The primary structure comprises 99 residues: N(2)-fixation sustaining protein CowN (99 aa).

Belongs to the CowN family.

Is required to sustain N(2)-dependent growth in the presence of low levels of carbon monoxide (CO). Probably acts by protecting the N(2) fixation ability of the nitrogenase complex, which is inactivated in the presence of CO. This Magnetococcus marinus (strain ATCC BAA-1437 / JCM 17883 / MC-1) protein is N(2)-fixation sustaining protein CowN.